Consider the following 338-residue polypeptide: MKVFYDKDADLSLIKGKNVTIIGYGSQGHAHALNLKDSGVNVTVGLRKSGASWNKAVNAGLQVKEVAEAVKNADVVMILLPDEQIADVYKNEVHANIKEGAALAFAHGFNVHYGAVIPRADLDVIMIAPKAPGHTVRATYTQGGGVPHLIAVHQNKSGAARDIALSYATANGGGRAGIIETNFREETETDLFGEQAVLCGGTVELIKAGFETLVEAGYAPEMAYFECLHELKLIVDLIYEGGIANMNYSISNNAEYGEYVTGPRVVTEETKKAMKQCLKDIQTGEYAKSFLLENKAGAPTLISRRRLNAEHEIEVVGEKLRAMMPWIAKNKMVDQSKN.

In terms of domain architecture, KARI N-terminal Rossmann spans 1–181 (MKVFYDKDAD…GGGRAGIIET (181 aa)). NADP(+) is bound by residues 24–27 (YGSQ), Arg-47, and Ser-52. The active site involves His-107. Gly-133 is an NADP(+) binding site. The 146-residue stretch at 182–327 (NFREETETDL…EKLRAMMPWI (146 aa)) folds into the KARI C-terminal knotted domain. Positions 190, 194, 226, and 230 each coordinate Mg(2+). A substrate-binding site is contributed by Ser-251.

It belongs to the ketol-acid reductoisomerase family. Mg(2+) serves as cofactor.

It carries out the reaction (2R)-2,3-dihydroxy-3-methylbutanoate + NADP(+) = (2S)-2-acetolactate + NADPH + H(+). The catalysed reaction is (2R,3R)-2,3-dihydroxy-3-methylpentanoate + NADP(+) = (S)-2-ethyl-2-hydroxy-3-oxobutanoate + NADPH + H(+). It functions in the pathway amino-acid biosynthesis; L-isoleucine biosynthesis; L-isoleucine from 2-oxobutanoate: step 2/4. It participates in amino-acid biosynthesis; L-valine biosynthesis; L-valine from pyruvate: step 2/4. Its function is as follows. Involved in the biosynthesis of branched-chain amino acids (BCAA). Catalyzes an alkyl-migration followed by a ketol-acid reduction of (S)-2-acetolactate (S2AL) to yield (R)-2,3-dihydroxy-isovalerate. In the isomerase reaction, S2AL is rearranged via a Mg-dependent methyl migration to produce 3-hydroxy-3-methyl-2-ketobutyrate (HMKB). In the reductase reaction, this 2-ketoacid undergoes a metal-dependent reduction by NADPH to yield (R)-2,3-dihydroxy-isovalerate. The polypeptide is Ketol-acid reductoisomerase (NADP(+)) (Cupriavidus taiwanensis (strain DSM 17343 / BCRC 17206 / CCUG 44338 / CIP 107171 / LMG 19424 / R1) (Ralstonia taiwanensis (strain LMG 19424))).